Consider the following 179-residue polypeptide: UPF0398 protein Bsph_0756 (179 aa).

This sequence belongs to the UPF0398 family.

This chain is UPF0398 protein Bsph_0756, found in Lysinibacillus sphaericus (strain C3-41).